Here is a 434-residue protein sequence, read N- to C-terminus: Enolase (434 aa).

Residues His-158 and Glu-167 each coordinate substrate. Glu-210 acts as the Proton donor in catalysis. 3 residues coordinate Mg(2+): Asp-245, Glu-294, and Asp-319. Substrate contacts are provided by Glu-294 and Asp-319. The active-site Proton acceptor is Lys-344. Substrate-binding positions include 371–374 (SHRS) and Lys-395.

Belongs to the enolase family. Homodimer. Requires Mg(2+) as cofactor.

It is found in the cytoplasm. The enzyme catalyses (2R)-2-phosphoglycerate = phosphoenolpyruvate + H2O. It participates in carbohydrate degradation; glycolysis; pyruvate from D-glyceraldehyde 3-phosphate: step 4/5. This Schistosoma mansoni (Blood fluke) protein is Enolase (ENO).